We begin with the raw amino-acid sequence, 959 residues long: Probable transport protein MmpL4 (959 aa).

The next 11 helical transmembrane spans lie at 25-45 (FAVPIILVWLAIAVTVSVFIP), 205-225 (VIVILVTLLLVYRSFITVILL), 239-259 (VVALLGHTGLIGLSTFAVNLL), 300-320 (FHVILGSGLTISGATFCLSFA), 333-353 (AVGMLIAVAVALTLGPAVLTV), 381-401 (WPLPILITTCAIAMVGLLALP), 766-786 (WDLVIAGISSLCLIFIIMLII), 790-810 (FVAAAVIVGTVALSLGASFGL), 818-838 (ILGIELHYLVLAMSVIVLLAV), 872-892 (VVTNAGLVFAFTMASMVVSDL), and 902-922 (IGLGLLFDTLIVRSFMMPSIA).

The protein belongs to the resistance-nodulation-cell division (RND) (TC 2.A.6) family. MmpL subfamily.

Its subcellular location is the cell membrane. The sequence is that of Probable transport protein MmpL4 (mmpL4) from Mycobacterium leprae (strain TN).